A 1072-amino-acid chain; its full sequence is Integrator complex subunit 3 homolog (1072 aa).

2 disordered regions span residues 920 to 943 and 1002 to 1072; these read YPSSSPNKRKRPPKGISVSTSTPS and DTTV…NDSD. A phosphoserine mark is found at S1042, S1043, S1047, and S1048.

This sequence belongs to the Integrator subunit 3 family. Belongs to the multiprotein complex Integrator, at least composed of IntS1, IntS2, IntS3, IntS4, omd/IntS5, IntS6, defl/IntS7, IntS8, IntS9, IntS10, IntS11, IntS12, asun/IntS13, IntS14 and IntS15. The core complex associates with protein phosphatase 2A subunits mts/PP2A and Pp2A-29B, to form the Integrator-PP2A (INTAC) complex.

The protein localises to the nucleus. It is found in the cytoplasm. Its function is as follows. Component of the integrator complex, a multiprotein complex that terminates RNA polymerase II (Pol II) transcription in the promoter-proximal region of genes. The integrator complex provides a quality checkpoint during transcription elongation by driving premature transcription termination of transcripts that are unfavorably configured for transcriptional elongation: the complex terminates transcription by (1) catalyzing dephosphorylation of the C-terminal domain (CTD) of Pol II subunit Polr2A/Rbp1 and Spt5, and (2) degrading the exiting nascent RNA transcript via endonuclease activity. The integrator complex is also involved in the 3'-end processing of the U7 snRNA, and also the spliceosomal snRNAs U1, U2, U4 and U5. The polypeptide is Integrator complex subunit 3 homolog (IntS3) (Drosophila yakuba (Fruit fly)).